The chain runs to 750 residues: Polyribonucleotide nucleotidyltransferase (750 aa).

Aspartate 489 and aspartate 495 together coordinate Mg(2+). The KH domain occupies 556-620 (PKMITRRIPN…EGIDKVIAKI (65 aa)). The S1 motif domain maps to 630 to 701 (GSVYEVKVIK…KTRKDKVSRK (72 aa)). Positions 697 to 750 (KVSRKALMEKPEGYKERAPRDRDDKRGSRDNNRGRDNRGRDNRRDDRKPRENKD) are disordered. Over residues 702-750 (ALMEKPEGYKERAPRDRDDKRGSRDNNRGRDNRGRDNRRDDRKPRENKD) the composition is skewed to basic and acidic residues.

The protein belongs to the polyribonucleotide nucleotidyltransferase family. Mg(2+) is required as a cofactor.

It is found in the cytoplasm. The catalysed reaction is RNA(n+1) + phosphate = RNA(n) + a ribonucleoside 5'-diphosphate. In terms of biological role, involved in mRNA degradation. Catalyzes the phosphorolysis of single-stranded polyribonucleotides processively in the 3'- to 5'-direction. The sequence is that of Polyribonucleotide nucleotidyltransferase from Christiangramia forsetii (strain DSM 17595 / CGMCC 1.15422 / KT0803) (Gramella forsetii).